Reading from the N-terminus, the 532-residue chain is Variant surface glycoprotein ILTAT 1.23 (532 aa).

Residues 1 to 23 (MFKNINAAVLLLILSTRNDYANA) form the signal peptide. A glycan (N-linked (GlcNAc...) asparagine) is linked at N66. Disordered regions lie at residues 79 to 107 (APKK…RNHA) and 408 to 504 (MQAG…DQDK). Residue N419 is glycosylated (N-linked (GlcNAc...) asparagine). The span at 427 to 445 (CKWEEKDGKDGKCVADDSK) shows a compositional bias: basic and acidic residues. The segment covering 450–470 (GNAPAGAGDGTAGTTTTPNCA) has biased composition (low complexity). 2 stretches are compositionally biased toward basic and acidic residues: residues 472–484 (HTDK…ENKG) and 494–504 (KGKEGESDQDK). N509 is a glycosylation site (N-linked (GlcNAc...) asparagine). N509 carries the GPI-anchor amidated asparagine lipid modification. Residues 510-532 (GSFLAKKKFALSVVSAAFTALLF) constitute a propeptide, removed in mature form.

It is found in the cell membrane. Functionally, VSG forms a coat on the surface of the parasite. The trypanosome evades the immune response of the host by expressing a series of antigenically distinct VSGs from an estimated 1000 VSG genes. This is Variant surface glycoprotein ILTAT 1.23 from Trypanosoma brucei brucei.